The following is a 535-amino-acid chain: Nuclear/nucleolar GTPase 2 (535 aa).

A disordered region spans residues 1-42 (MAKKKERAVNVSGKPRHSLDVNRANDKKGAGGGAGGGGGGRS). The segment covering 17-29 (HSLDVNRANDKKG) has biased composition (basic and acidic residues). Gly residues predominate over residues 30–41 (AGGGAGGGGGGR). The region spanning 213–374 (WGELYKVIDS…LIDCPGVVYQ (162 aa)) is the CP-type G domain. The segment at 261–264 (NKCD) is G4. A G5 region spans residues 290 to 292 (SIN). Positions 323-330 (GYPNVGKS) are G1. The segment at 349–353 (GETKV) is G2. The tract at residues 367 to 370 (DCPG) is G3. The disordered stretch occupies residues 464–495 (FFVPPPQQGEDSPSETAEPVDKSDEEGVSSDR).

It belongs to the TRAFAC class YlqF/YawG GTPase family. RsgA subfamily.

Its subcellular location is the nucleus. It is found in the nucleolus. In terms of biological role, GTPase involved in pre-60S ribosomal subunit maturation. The protein is Nuclear/nucleolar GTPase 2 of Oryza sativa subsp. indica (Rice).